Here is a 315-residue protein sequence, read N- to C-terminus: Secreted frizzled-related protein 5 (315 aa).

A signal peptide spans 1 to 27 (MRAAAGGARAAVLALLLGALHGAPARG). The FZ domain occupies 46 to 163 (SKPPQCLDIP…PLDNDLCIAV (118 aa)). 8 disulfides stabilise this stretch: Cys-51–Cys-114, Cys-61–Cys-107, Cys-98–Cys-133, Cys-122–Cys-160, Cys-126–Cys-150, Cys-179–Cys-251, Cys-182–Cys-253, and Cys-196–Cys-301. Residues 179–301 (CAQCEMEHSA…AVKFMFSYPC (123 aa)) enclose the NTR domain.

Belongs to the secreted frizzled-related protein (sFRP) family. Strongly expressed in the retinal pigment epithelium (RPE). Weak expression in retina, brain, heart, liver, kidney, testis and muscle.

It is found in the secreted. In terms of biological role, soluble frizzled-related proteins (sFRPS) function as modulators of Wnt signaling through direct interaction with Wnts. They have a role in regulating cell growth and differentiation in specific cell types. SFRP5 may be involved in determining the polarity of photoreceptor, and perhaps other, cells in the retina. Inhibits Wnt8 signaling, in vitro. In Bos taurus (Bovine), this protein is Secreted frizzled-related protein 5 (SFRP5).